The following is a 436-amino-acid chain: Carboxypeptidase A5 (436 aa).

The signal sequence occupies residues Met-1–Gly-33. Positions Gln-34–Arg-126 are cleaved as a propeptide — activation peptide. Residues Ser-138–Thr-431 enclose the Peptidase M14 domain. Positions 196 and 199 each coordinate Zn(2+). Residues His-196–Glu-199, Arg-254, and Asn-271–Arg-272 each bind substrate. The cysteines at positions 265 and 288 are disulfide-linked. His-323 provides a ligand contact to Zn(2+). Substrate contacts are provided by residues Ser-324–Tyr-325 and Tyr-375. Glu-397 acts as the Proton donor/acceptor in catalysis.

It belongs to the peptidase M14 family. Requires Zn(2+) as cofactor.

The protein localises to the secreted. The polypeptide is Carboxypeptidase A5 (CPA5) (Macaca fascicularis (Crab-eating macaque)).